Consider the following 277-residue polypeptide: Large ribosomal subunit protein uL2cz/uL2cy (277 aa).

Disordered stretches follow at residues 1 to 31 (MAIH…NTRK) and 227 to 277 (NPVD…RRSK).

This sequence belongs to the universal ribosomal protein uL2 family. As to quaternary structure, part of the 50S ribosomal subunit.

The protein resides in the plastid. The protein localises to the chloroplast. The protein is Large ribosomal subunit protein uL2cz/uL2cy (rpl2-A) of Manihot esculenta (Cassava).